The primary structure comprises 379 residues: MSDFLPFSRPSMGDAELAALREVLASGWITTGPKNQALEAAFCQLTGNRHAIAVSSATGGMHVTLMALGIGPGDEVITPSQTWVSTLNMICLLGATPVMIDVDNDNLMITPDAVEAAITSRTKAIIPVHYAGAPADIDAIRAVGERHGIPVIEDAAHAAGTHYKGRHIGWQGTAIFSFHAIKNMTCAEGGLIVTDDDELASRIRSLKFHGLGVDAYDRQTHGRAPQAEVITPGFKYNLADINAALALVQLEKLSHANQRRTEIAQRYLRELADTPFKPLTVPAWDHQHAWHLFIIRVDEAACGISRDALMEKLKAMGIGTGLHFRAAHTQKYYRERFPEVSLPNTEWNSARICSLPLFPDMTDDDVTRVISALRQLSGR.

Lys-182 bears the N6-(pyridoxal phosphate)lysine mark.

Belongs to the DegT/DnrJ/EryC1 family. ArnB subfamily. Homodimer. The cofactor is pyridoxal 5'-phosphate.

It carries out the reaction UDP-4-amino-4-deoxy-beta-L-arabinose + 2-oxoglutarate = UDP-beta-L-threo-pentopyranos-4-ulose + L-glutamate. The protein operates within nucleotide-sugar biosynthesis; UDP-4-deoxy-4-formamido-beta-L-arabinose biosynthesis; UDP-4-deoxy-4-formamido-beta-L-arabinose from UDP-alpha-D-glucuronate: step 2/3. It functions in the pathway bacterial outer membrane biogenesis; lipopolysaccharide biosynthesis. Its function is as follows. Catalyzes the conversion of UDP-4-keto-arabinose (UDP-Ara4O) to UDP-4-amino-4-deoxy-L-arabinose (UDP-L-Ara4N). The modified arabinose is attached to lipid A and is required for resistance to polymyxin and cationic antimicrobial peptides. In Klebsiella pneumoniae (strain 342), this protein is UDP-4-amino-4-deoxy-L-arabinose--oxoglutarate aminotransferase.